Here is a 169-residue protein sequence, read N- to C-terminus: Ribosome maturation factor RimM (169 aa).

A PRC barrel domain is found at Asn-92–Asn-166.

Belongs to the RimM family. Binds ribosomal protein uS19.

The protein resides in the cytoplasm. Functionally, an accessory protein needed during the final step in the assembly of 30S ribosomal subunit, possibly for assembly of the head region. Essential for efficient processing of 16S rRNA. May be needed both before and after RbfA during the maturation of 16S rRNA. It has affinity for free ribosomal 30S subunits but not for 70S ribosomes. In Buchnera aphidicola subsp. Cinara cedri (strain Cc), this protein is Ribosome maturation factor RimM.